A 330-amino-acid polypeptide reads, in one-letter code: Phospho-N-acetylmuramoyl-pentapeptide-transferase (330 aa).

Transmembrane regions (helical) follow at residues 13–33 (VFVF…LIPM), 58–78 (PTMG…FYAG), 83–103 (ILPL…DDFI), 113–133 (LYWN…AVYL), 152–172 (VSLG…STNA), 179–199 (LDGL…IVAM), 209–229 (MFSA…AYPA), 231–250 (IFMG…AIAI), and 304–324 (VKVV…GFFA).

The protein belongs to the glycosyltransferase 4 family. MraY subfamily. It depends on Mg(2+) as a cofactor.

It is found in the cell membrane. The catalysed reaction is UDP-N-acetyl-alpha-D-muramoyl-L-alanyl-gamma-D-glutamyl-meso-2,6-diaminopimeloyl-D-alanyl-D-alanine + di-trans,octa-cis-undecaprenyl phosphate = di-trans,octa-cis-undecaprenyl diphospho-N-acetyl-alpha-D-muramoyl-L-alanyl-D-glutamyl-meso-2,6-diaminopimeloyl-D-alanyl-D-alanine + UMP. Its pathway is cell wall biogenesis; peptidoglycan biosynthesis. Catalyzes the initial step of the lipid cycle reactions in the biosynthesis of the cell wall peptidoglycan: transfers peptidoglycan precursor phospho-MurNAc-pentapeptide from UDP-MurNAc-pentapeptide onto the lipid carrier undecaprenyl phosphate, yielding undecaprenyl-pyrophosphoryl-MurNAc-pentapeptide, known as lipid I. The protein is Phospho-N-acetylmuramoyl-pentapeptide-transferase of Acetivibrio thermocellus (strain ATCC 27405 / DSM 1237 / JCM 9322 / NBRC 103400 / NCIMB 10682 / NRRL B-4536 / VPI 7372) (Clostridium thermocellum).